A 169-amino-acid polypeptide reads, in one-letter code: Peptide methionine sulfoxide reductase MsrA (169 aa).

C10 is an active-site residue.

It belongs to the MsrA Met sulfoxide reductase family.

It catalyses the reaction L-methionyl-[protein] + [thioredoxin]-disulfide + H2O = L-methionyl-(S)-S-oxide-[protein] + [thioredoxin]-dithiol. The enzyme catalyses [thioredoxin]-disulfide + L-methionine + H2O = L-methionine (S)-S-oxide + [thioredoxin]-dithiol. Functionally, has an important function as a repair enzyme for proteins that have been inactivated by oxidation. Catalyzes the reversible oxidation-reduction of methionine sulfoxide in proteins to methionine. In Streptococcus agalactiae serotype Ia (strain ATCC 27591 / A909 / CDC SS700), this protein is Peptide methionine sulfoxide reductase MsrA.